The following is a 388-amino-acid chain: ATP phosphoribosyltransferase regulatory subunit (388 aa).

This sequence belongs to the class-II aminoacyl-tRNA synthetase family. HisZ subfamily. In terms of assembly, heteromultimer composed of HisG and HisZ subunits.

Its subcellular location is the cytoplasm. Its pathway is amino-acid biosynthesis; L-histidine biosynthesis; L-histidine from 5-phospho-alpha-D-ribose 1-diphosphate: step 1/9. Required for the first step of histidine biosynthesis. May allow the feedback regulation of ATP phosphoribosyltransferase activity by histidine. The polypeptide is ATP phosphoribosyltransferase regulatory subunit (Acinetobacter baumannii (strain AB307-0294)).